The sequence spans 362 residues: 3-dehydroquinate synthase (362 aa).

Residues 71–76 (DGEQYK), 105–109 (GVVGD), 129–130 (TT), Lys142, Lys151, and 169–172 (CLKT) contribute to the NAD(+) site. Zn(2+)-binding residues include Glu184, His247, and His264.

It belongs to the sugar phosphate cyclases superfamily. Dehydroquinate synthase family. Requires Co(2+) as cofactor. Zn(2+) is required as a cofactor. It depends on NAD(+) as a cofactor.

It localises to the cytoplasm. The catalysed reaction is 7-phospho-2-dehydro-3-deoxy-D-arabino-heptonate = 3-dehydroquinate + phosphate. The protein operates within metabolic intermediate biosynthesis; chorismate biosynthesis; chorismate from D-erythrose 4-phosphate and phosphoenolpyruvate: step 2/7. Its function is as follows. Catalyzes the conversion of 3-deoxy-D-arabino-heptulosonate 7-phosphate (DAHP) to dehydroquinate (DHQ). This Shigella flexneri serotype 5b (strain 8401) protein is 3-dehydroquinate synthase.